Consider the following 375-residue polypeptide: 23S rRNA (uracil(747)-C(5))-methyltransferase RlmC (375 aa).

[4Fe-4S] cluster-binding residues include C3, C11, C14, and C87. The S-adenosyl-L-methionine site is built by Q212, F241, E262, and N307. Residue C334 is the Nucleophile of the active site.

Belongs to the class I-like SAM-binding methyltransferase superfamily. RNA M5U methyltransferase family. RlmC subfamily.

It catalyses the reaction uridine(747) in 23S rRNA + S-adenosyl-L-methionine = 5-methyluridine(747) in 23S rRNA + S-adenosyl-L-homocysteine + H(+). Its function is as follows. Catalyzes the formation of 5-methyl-uridine at position 747 (m5U747) in 23S rRNA. The protein is 23S rRNA (uracil(747)-C(5))-methyltransferase RlmC of Escherichia coli O45:K1 (strain S88 / ExPEC).